The following is a 305-amino-acid chain: NAD-dependent protein deacylase SIR4 (305 aa).

The transit peptide at 1–10 directs the protein to the mitochondrion; sequence MSAQVMHNRV. The region spanning 11-305 is the Deacetylase sirtuin-type domain; the sequence is MGTVKDSASK…VLEELASTIR (295 aa). Residues 37–57 and 118–121 contribute to the NAD(+) site; these read GAGV…GIYS and QNVD. Catalysis depends on H139, which acts as the Proton acceptor. Zn(2+)-binding residues include C147, C150, C209, and C212. Residues 249–251, 275–277, and S293 each bind NAD(+); these read GSS and NLG.

It belongs to the sirtuin family. Class II subfamily. Zn(2+) is required as a cofactor.

The protein resides in the mitochondrion matrix. It carries out the reaction N(6)-acetyl-L-lysyl-[protein] + NAD(+) + H2O = 2''-O-acetyl-ADP-D-ribose + nicotinamide + L-lysyl-[protein]. Its function is as follows. NAD-dependent protein deacylase. Catalyzes the NAD-dependent hydrolysis of acyl groups from lysine residues. The sequence is that of NAD-dependent protein deacylase SIR4 from Batrachochytrium dendrobatidis (strain JAM81 / FGSC 10211) (Frog chytrid fungus).